A 370-amino-acid chain; its full sequence is Propane 2-monooxygenase, reductase component (370 aa).

Over residues 1 to 14 (MAPRPLRRHPPLHH) the composition is skewed to basic residues. Positions 1–21 (MAPRPLRRHPPLHHSFHESRR) are disordered. The region spanning 28 to 118 (HRINFEPVDI…DCTIELLNFD (91 aa)) is the 2Fe-2S ferredoxin-type domain. Residues C62, C67, C70, and C102 each coordinate [2Fe-2S] cluster. The 102-residue stretch at 128 to 229 (IQDVRTRVTR…TGPYGSFTIK (102 aa)) folds into the FAD-binding FR-type domain.

It belongs to the TmoA/XamoA family. The propane 2-monooxygenase multicomponent enzyme system is composed of an electron transfer component and a monooxygenase component interacting with the effector protein PrmD. The electron transfer component is composed of a reductase (PrmB), and the monooxygenase component is formed by a large subunit (PrmA) and a small subunit (PrmC). The cofactor is FAD. [2Fe-2S] cluster serves as cofactor.

In terms of biological role, reductase component of the propane 2-monooxygenase multicomponent enzyme system which is involved in the degradation of propane via the O2-dependent hydroxylation of propane. Reductase catalyzes the transfer of electrons from NADH or NADPH to monooxygenase. The protein is Propane 2-monooxygenase, reductase component of Rhodococcus jostii (strain RHA1).